The sequence spans 405 residues: SPbeta prophage-derived uncharacterized protein YomR (405 aa).

Residues 9–36 adopt a coiled-coil conformation; it reads QLKQNNIQINSLRGSNDRAEKHMLEHEQ.

The sequence is that of SPbeta prophage-derived uncharacterized protein YomR (yomR) from Bacillus subtilis (strain 168).